Consider the following 861-residue polypeptide: E3 ubiquitin-protein ligase HECTD3 (861 aa).

A2 carries the post-translational modification N-acetylalanine. Position 12 is a phosphoserine (S12). Residues 219–397 form the DOC domain; the sequence is DEDLIHFLYD…ASLVRYPRLE (179 aa). The 346-residue stretch at 512–857 folds into the HECT domain; the sequence is YEKPLDYRWP…NCVAIDTDMS (346 aa). C823 (glycyl thioester intermediate) is an active-site residue.

In terms of assembly, interacts with TRIOBP. Interacts with STX8.

It localises to the cytoplasm. It is found in the perinuclear region. The enzyme catalyses S-ubiquitinyl-[E2 ubiquitin-conjugating enzyme]-L-cysteine + [acceptor protein]-L-lysine = [E2 ubiquitin-conjugating enzyme]-L-cysteine + N(6)-ubiquitinyl-[acceptor protein]-L-lysine.. It participates in protein modification; protein ubiquitination. E3 ubiquitin ligases accepts ubiquitin from an E2 ubiquitin-conjugating enzyme in the form of a thioester and then directly transfers the ubiquitin to targeted substrates. Mediates ubiquitination of TRIOBP and its subsequent proteasomal degradation, thus facilitating cell cycle progression by regulating the turn-over of TRIOBP. Also mediates ubiquitination of STX8. In Mus musculus (Mouse), this protein is E3 ubiquitin-protein ligase HECTD3 (Hectd3).